Reading from the N-terminus, the 259-residue chain is Thiazole synthase (259 aa).

The Schiff-base intermediate with DXP role is filled by Lys98. Residues Gly159, Ala185–Gly186, and Asn207–Ser208 contribute to the 1-deoxy-D-xylulose 5-phosphate site.

Belongs to the ThiG family. Homotetramer. Forms heterodimers with either ThiH or ThiS.

The protein localises to the cytoplasm. It carries out the reaction [ThiS sulfur-carrier protein]-C-terminal-Gly-aminoethanethioate + 2-iminoacetate + 1-deoxy-D-xylulose 5-phosphate = [ThiS sulfur-carrier protein]-C-terminal Gly-Gly + 2-[(2R,5Z)-2-carboxy-4-methylthiazol-5(2H)-ylidene]ethyl phosphate + 2 H2O + H(+). It participates in cofactor biosynthesis; thiamine diphosphate biosynthesis. In terms of biological role, catalyzes the rearrangement of 1-deoxy-D-xylulose 5-phosphate (DXP) to produce the thiazole phosphate moiety of thiamine. Sulfur is provided by the thiocarboxylate moiety of the carrier protein ThiS. In vitro, sulfur can be provided by H(2)S. The protein is Thiazole synthase of Chlorobaculum tepidum (strain ATCC 49652 / DSM 12025 / NBRC 103806 / TLS) (Chlorobium tepidum).